Consider the following 93-residue polypeptide: Putative pterin-4-alpha-carbinolamine dehydratase (93 aa).

It belongs to the pterin-4-alpha-carbinolamine dehydratase family.

The enzyme catalyses (4aS,6R)-4a-hydroxy-L-erythro-5,6,7,8-tetrahydrobiopterin = (6R)-L-erythro-6,7-dihydrobiopterin + H2O. This Roseiflexus sp. (strain RS-1) protein is Putative pterin-4-alpha-carbinolamine dehydratase.